The chain runs to 428 residues: MNTKRSEEIFGAAKNLMPGGVSSPVRAFKSVEGDPIVFDRVKGPYAWDVDGNRYIDYVGSWGPAICGHAHPEVIAALQETLEKGTSFGAPCVLENQLAEMVIDAVPSVEMVRFVNSGTEACMAVLRLMRAFTGRDKVIKFEGCYHGHADMFLVKAGSGVATLGLPDSPGVPRSTTANTLTAPYNDLEAVKELFAENPDAISGVILEPVVGNAGFITPEPGFLEGLREVTQENGALLVFDEVMTGFRISYGGAQERFGVTPDLTTMGKVIGGGLPVGAYGGRKEIMSMVSPSGPMYQAGTLSGNPLAMTAGIKTLELLKQEGTYEKLEALTKKLLDGILTAAKESNIPIYGQSISAMFGFYLCEGPVRNFEEAKSSDTELFSKIHRLMLQKGVYLAPSAFEAGFTSLAHSEDDINATIKAFQEIFSEIS.

The residue at position 267 (Lys267) is an N6-(pyridoxal phosphate)lysine.

It belongs to the class-III pyridoxal-phosphate-dependent aminotransferase family. HemL subfamily. Homodimer. Pyridoxal 5'-phosphate is required as a cofactor.

The protein resides in the cytoplasm. The catalysed reaction is (S)-4-amino-5-oxopentanoate = 5-aminolevulinate. Its pathway is porphyrin-containing compound metabolism; protoporphyrin-IX biosynthesis; 5-aminolevulinate from L-glutamyl-tRNA(Glu): step 2/2. It functions in the pathway porphyrin-containing compound metabolism; chlorophyll biosynthesis. This is Glutamate-1-semialdehyde 2,1-aminomutase from Prochlorococcus marinus (strain NATL1A).